The sequence spans 492 residues: Membrane-bound glycerophospholipid O-acyltransferase 1 (492 aa).

6 consecutive transmembrane segments (helical) span residues 33–53 (VNFV…RIYL), 69–89 (ILGI…LFVL), 125–145 (IYIF…MIVT), 179–199 (PSLL…AGPC), 237–257 (MGAV…FLTL), and 296–316 (YFAW…FNGM). Catalysis depends on residues Asn349 and His380. A run of 3 helical transmembrane segments spans residues 370–390 (VLTF…YFTF), 423–443 (VVTW…FVML), and 452–472 (YKSV…FLPI). A Phosphoserine modification is found at Ser486.

The protein belongs to the membrane-bound acyltransferase family. Highly expressed in stomach, epididymis, and colon.

It localises to the endoplasmic reticulum membrane. It carries out the reaction a 1-acyl-sn-glycero-3-phosphoethanolamine + an acyl-CoA = a 1,2-diacyl-sn-glycero-3-phosphoethanolamine + CoA. It catalyses the reaction a 1-acyl-sn-glycero-3-phospho-L-serine + an acyl-CoA = a 1,2-diacyl-sn-glycero-3-phospho-L-serine + CoA. The enzyme catalyses a 1-acyl-sn-glycero-3-phosphocholine + an acyl-CoA = a 1,2-diacyl-sn-glycero-3-phosphocholine + CoA. The catalysed reaction is a 1-O-(1Z-alkenyl)-sn-glycero-3-phosphoethanolamine + (9Z)-octadecenoyl-CoA = 1-O-(1Z)-alkenyl-2-(9Z)-octadecenoyl-sn-glycero-3-phosphoethanolamine + CoA. It carries out the reaction 1-octadecanoyl-sn-glycero-3-phosphoethanolamine + (9Z)-octadecenoyl-CoA = 1-octadecanoyl-2-(9Z-octadecenoyl)-sn-glycero-3-phosphoethanolamine + CoA. It catalyses the reaction 1-(9Z-octadecenoyl)-sn-glycero-3-phospho-L-serine + (9Z)-octadecenoyl-CoA = 1,2-di-(9Z)-octadecenoyl-sn-glycero-3-phospho-L-serine + CoA. The enzyme catalyses 1-(9Z-octadecenoyl)-sn-glycero-3-phosphoethanolamine + (9Z)-octadecenoyl-CoA = 1,2-di-(9Z-octadecenoyl)-sn-glycero-3-phosphoethanolamine + CoA. The catalysed reaction is 1-hexadecanoyl-sn-glycero-3-phosphoethanolamine + (9Z)-octadecenoyl-CoA = 1-hexadecanoyl-2-(9Z-octadecenoyl)-sn-glycero-3-phosphoethanolamine + CoA. It carries out the reaction 1-(10Z-heptadecenoyl)-sn-glycero-3-phosphoethanolamine + hexadecanoyl-CoA = 1-(10Z-heptadecenoyl)-2-hexadecanoyl-sn-glycero-3-phosphoethanolamine + CoA. It catalyses the reaction 1-(9Z-octadecenoyl)-sn-glycero-3-phospho-L-serine + octadecanoyl-CoA = 1-(9Z-octadecenoyl)-2-octadecanoyl-sn-glycero-3-phospho-L-serine + CoA. The enzyme catalyses 1-(9Z-octadecenoyl)-sn-glycero-3-phospho-L-serine + (9Z)-hexadecenoyl-CoA = 1-(9Z-octadecenoyl)-2-(9Z-hexadecenoyl)-sn-glycero-3-phospho-L-serine + CoA. The catalysed reaction is 1-(9Z-octadecenoyl)-sn-glycero-3-phospho-L-serine + (9Z,12Z)-octadecadienoyl-CoA = 1-(9Z-octadecenoyl)-2-(9Z,12Z-octadienoyl)-sn-glycero-3-phospho-L-serine + CoA. It carries out the reaction 1-hexadecanoyl-sn-glycero-3-phosphocholine + (9Z)-octadecenoyl-CoA = 1-hexadecanoyl-2-(9Z-octadecenoyl)-sn-glycero-3-phosphocholine + CoA. It catalyses the reaction 1-(10Z-heptadecenoyl)-sn-glycero-3-phosphoethanolamine + (9Z)-octadecenoyl-CoA = 1-(10Z-heptadecenoyl)-2-(9Z-octadecenoyl)-sn-glycero-3-phosphoethanolamine + CoA. Its pathway is lipid metabolism; phospholipid metabolism. Acyltransferase which catalyzes the transfer of an acyl group from an acyl-CoA towards a lysophospholipid producing a phospholipid and participates in the reacylation step of the phospholipid remodeling pathway also known as the Lands cycle. Acts on lysophosphatidylserine (1-acyl-2-hydroxy-sn-glycero-3-phospho-L-serine or LPS) and lysophosphatidylethanolamine (1-acyl-sn-glycero-3-phosphoethanolamine or LPE), and to a lesser extend lysophosphatidylcholine. Prefers oleoyl-CoA as the acyl donor and 1-oleoyl-LPE as acceptor. May play a role in neurite outgrowth during neuronal differentiation. The sequence is that of Membrane-bound glycerophospholipid O-acyltransferase 1 from Mus musculus (Mouse).